The sequence spans 463 residues: Steroidogenic factor 1 (463 aa).

A DNA-binding region (nuclear receptor) is located at residues 10–85 (DELCPVCGDK…VGMRLEAVRA (76 aa)). An NR C4-type zinc finger spans residues 13–33 (CPVCGDKVSGYHYGLLTCESC). Lys-34, Lys-38, and Lys-72 each carry N6-acetyllysine. The segment at 49–73 (CTESQNCKIDKTQRKRCPYCRFQKC) adopts an NR C4-type zinc-finger fold. A Glycyl lysine isopeptide (Lys-Gly) (interchain with G-Cter in SUMO) cross-link involves residue Lys-119. The disordered stretch occupies residues 119–160 (KLETGPSMGPPPQTDYPLAPALHPGAKGLAPAPPAGPPGDYE). Positions 135 to 148 (PLAPALHPGAKGLA) are enriched in low complexity. A Glycyl lysine isopeptide (Lys-Gly) (interchain with G-Cter in SUMO) cross-link involves residue Lys-193. The tract at residues 197–216 (PEPYASPHEPAPPYGYPEPY) is disordered. Ser-202 carries the post-translational modification Phosphoserine; by CDK7. The span at 205–216 (EPAPPYGYPEPY) shows a compositional bias: pro residues. The NR LBD domain occupies 224-461 (GVPELILKLL…NLLIEMLHAK (238 aa)). Positions 343, 438, and 442 each coordinate a 1,2-diacyl-sn-glycero-3-phosphocholine.

This sequence belongs to the nuclear hormone receptor family. NR5 subfamily. In terms of assembly, binds DNA as a monomer. Part of a complex consisting of SFPQ, NONO and NR5A1. Interacts with NR0B2, NCOA2 and PPARGC1A. Interacts with DGKQ and CDK7. Binds to and activated by HIPK3. Post-translationally, acetylation stimulates the transcriptional activity. In terms of processing, sumoylation reduces CDK7-mediated phosphorylation on Ser-202. Phosphorylated on Ser-202 by CDK7. This phosphorylation promotes transcriptional activity. Expressed in the pre-granulosa and Sertoli cells of the ovary and testis, respectively. In the testis it is also present in the interstitial cells. In the adult ovary it is expressed in the interstitial gland, and in the granulosa cells and theca interna of small to medium-sized antral follicles, but is not expressed in large antral follicles.

The protein resides in the nucleus. Its function is as follows. Transcriptional activator. Seems to be essential for sexual differentiation and formation of the primary steroidogenic tissues. Binds to the Ad4 site found in the promoter region of steroidogenic P450 genes such as CYP11A, CYP11B and CYP21B. Also regulates the AMH/Muellerian inhibiting substance gene as well as the AHCH and STAR genes. 5'-YCAAGGYC-3' and 5'-RRAGGTCA-3' are the consensus sequences for the recognition by NR5A1. The SFPQ-NONO-NR5A1 complex binds to the CYP17 promoter and regulates basal and cAMP-dependent transcriptional activity. Binds phosphatidylcholine and phospholipids with a phosphatidylinositol (PI) headgroup, in particular PI(3,4)P2 and PI(3,4,5)P3. Activated by the phosphorylation of NR5A1 by HIPK3 leading to increased steroidogenic gene expression upon cAMP signaling pathway stimulation. This Notamacropus eugenii (Tammar wallaby) protein is Steroidogenic factor 1 (NR5A1).